Here is a 2225-residue protein sequence, read N- to C-terminus: Multifunctional protein CAD (2225 aa).

At alanine 2 the chain carries N-acetylalanine. The GATase (Glutamine amidotransferase) stretch occupies residues 2–365; sequence AALVLEDGSV…TVREAVAGNP (364 aa). Positions 44, 222, and 224 each coordinate L-glutamine. A Glutamine amidotransferase type-1 domain is found at 177-363; it reads RICALDCGLK…LETVREAVAG (187 aa). The active-site Nucleophile; for GATase activity is the cysteine 252. L-glutamine is bound by residues leucine 253, glutamine 256, asparagine 294, glycine 296, and phenylalanine 297. Active-site for GATase activity residues include histidine 336 and glutamate 338. Residues 366-394 are linker; that stretch reads GGQTVKERLVQRLCPPGLLIPGSGLPPPR. The CPSase A stretch occupies residues 395–933; it reads KVLILGSGGL…NTHDLDFRTP (539 aa). Positions 395-1455 are CPSase (Carbamoyl phosphate synthase); it reads KVLILGSGGL…APPLKVHVDC (1061 aa). Threonine 456 bears the Phosphothreonine; by MAPK1 mark. ATP-binding residues include arginine 515, arginine 555, glycine 561, glycine 562, lysine 592, glutamate 599, glycine 625, isoleucine 626, histidine 627, glutamine 668, and glutamate 682. One can recognise an ATP-grasp 1 domain in the interval 519–711; sequence AARMAEIGEH…LAYVAAKLAL (193 aa). Residues glutamine 668, glutamate 682, and asparagine 684 each contribute to the Mg(2+) site. Residues glutamine 668, glutamate 682, and asparagine 684 each coordinate Mn(2+). Residue lysine 747 is modified to N6-acetyllysine. The interval 934-1455 is CPSase B; that stretch reads HVLVLGSGVY…APPLKVHVDC (522 aa). Phosphoserine is present on serine 1038. One can recognise an ATP-grasp 2 domain in the interval 1052-1243; the sequence is SRLLDTIGIS…LVALATRIIM (192 aa). Arginine 1088, lysine 1127, isoleucine 1129, glutamate 1134, glycine 1159, valine 1160, histidine 1161, serine 1162, glutamine 1202, and glutamate 1214 together coordinate ATP. Glutamine 1202, glutamate 1214, and asparagine 1216 together coordinate Mg(2+). The Mn(2+) site is built by glutamine 1202, glutamate 1214, and asparagine 1216. In terms of domain architecture, MGS-like spans 1308-1462; the sequence is FKIPKKNILL…VDCMTSQKLV (155 aa). Serine 1406 is subject to Phosphoserine; by PKA. At lysine 1411 the chain carries N6-acetyllysine. The segment at 1456–1788 is DHOase (dihydroorotase); it reads MTSQKLVRLP…VKGTIRRVVL (333 aa). Positions 1471 and 1473 each coordinate Zn(2+). (S)-dihydroorotate contacts are provided by arginine 1475 and asparagine 1505. 5 residues coordinate Zn(2+): lysine 1556, histidine 1590, cysteine 1613, histidine 1614, and glutamate 1637. Lysine 1556 carries the N6-carboxylysine modification. Residue arginine 1661 participates in (S)-dihydroorotate binding. Residue aspartate 1686 participates in Zn(2+) binding. The active-site For DHOase activity is the aspartate 1686. Residues histidine 1690 and proline 1702 each coordinate (S)-dihydroorotate. The segment at 1789–1917 is linker; it reads RGEVAYIDGQ…GLLHPQTSPL (129 aa). The disordered stretch occupies residues 1813-1911; that stretch reads PQGAVPQPPP…QNLGSSGLLH (99 aa). Residues 1825–1834 are compositionally biased toward low complexity; sequence PATTEITTTP. Serine 1859 carries the post-translational modification Phosphoserine; by RPS6KB1 and PKA. Residues 1866–1878 show a composition bias toward basic and acidic residues; sequence EEPKEKPSRKVVE. Phosphoserine; by PKC; in vitro is present on serine 1873. At threonine 1884 the chain carries Phosphothreonine. Residues 1899–1911 are compositionally biased toward polar residues; it reads ASPQNLGSSGLLH. Residues serine 1900 and serine 1938 each carry the phosphoserine modification. Residues 1918-2225 form an ATCase (Aspartate transcarbamylase) region; that stretch reads LHSLVGQHIL…ALLATVLGRF (308 aa). Carbamoyl phosphate is bound by residues arginine 1975 and threonine 1976. Lysine 2003 contributes to the L-aspartate binding site. Arginine 2024, histidine 2052, and glutamine 2055 together coordinate carbamoyl phosphate. Residues arginine 2085 and arginine 2146 each contribute to the L-aspartate site. Residues methionine 2185 and proline 2186 each coordinate carbamoyl phosphate.

The protein in the N-terminal section; belongs to the CarA family. This sequence in the 2nd section; belongs to the CarB family. In the 3rd section; belongs to the metallo-dependent hydrolases superfamily. DHOase family. CAD subfamily. It in the C-terminal section; belongs to the aspartate/ornithine carbamoyltransferase superfamily. ATCase family. In terms of assembly, homohexamer. Interacts with CIPC. The cofactor is Zn(2+). It depends on Mg(2+) as a cofactor. Requires Mn(2+) as cofactor. In terms of processing, activated by MAP kinase (Erk1/2) phosphorylation just prior to the S phase of the cell cycle, when the demand for pyrimidine nucleotides is greatest, and down-regulated as the cells emerge from S phase by protein kinase A (PKA) phosphorylation. Phosphorylation at Ser-1859 by RPS6KB1 downstream of MTOR promotes oligomerization and stimulates dihydroorotase activity. Phosphorylation at Ser-1406 reduces sensitivity to feedback inhibition by UTP.

It localises to the cytoplasm. It is found in the nucleus. The catalysed reaction is hydrogencarbonate + L-glutamine + 2 ATP + H2O = carbamoyl phosphate + L-glutamate + 2 ADP + phosphate + 2 H(+). It catalyses the reaction L-glutamine + H2O = L-glutamate + NH4(+). The enzyme catalyses hydrogencarbonate + NH4(+) + 2 ATP = carbamoyl phosphate + 2 ADP + phosphate + 2 H(+). It carries out the reaction carbamoyl phosphate + L-aspartate = N-carbamoyl-L-aspartate + phosphate + H(+). The catalysed reaction is (S)-dihydroorotate + H2O = N-carbamoyl-L-aspartate + H(+). The protein operates within pyrimidine metabolism; UMP biosynthesis via de novo pathway; (S)-dihydroorotate from bicarbonate: step 1/3. It participates in pyrimidine metabolism; UMP biosynthesis via de novo pathway; (S)-dihydroorotate from bicarbonate: step 2/3. It functions in the pathway pyrimidine metabolism; UMP biosynthesis via de novo pathway; (S)-dihydroorotate from bicarbonate: step 3/3. With respect to regulation, allosterically regulated and controlled by phosphorylation. 5-phosphoribose 1-diphosphate (PRPP) is an activator while UMP and UTP are inhibitors of the CPSase reaction. Multifunctional protein that encodes the first 3 enzymatic activities of the de novo pyrimidine pathway: carbamoylphosphate synthetase (CPSase; EC 6.3.5.5), aspartate transcarbamylase (ATCase; EC 2.1.3.2) and dihydroorotase (DHOase; EC 3.5.2.3). The CPSase-function is accomplished in 2 steps, by a glutamine-dependent amidotransferase activity (GATase) that binds and cleaves glutamine to produce ammonia, followed by an ammonium-dependent carbamoyl phosphate synthetase, which reacts with the ammonia, hydrogencarbonate and ATP to form carbamoyl phosphate. The endogenously produced carbamoyl phosphate is sequestered and channeled to the ATCase active site. ATCase then catalyzes the formation of carbamoyl-L-aspartate from L-aspartate and carbamoyl phosphate. In the last step, DHOase catalyzes the cyclization of carbamoyl aspartate to dihydroorotate. The sequence is that of Multifunctional protein CAD (CAD) from Mesocricetus auratus (Golden hamster).